The chain runs to 225 residues: Phosphoenolpyruvate guanylyltransferase (225 aa).

The phosphoenolpyruvate site is built by threonine 150, glycine 166, and serine 169. Positions 167–186 (PESARGHANSGARPLNGQWP) are disordered.

Belongs to the CofC family.

It catalyses the reaction phosphoenolpyruvate + GTP + H(+) = enolpyruvoyl-2-diphospho-5'-guanosine + diphosphate. It participates in cofactor biosynthesis; coenzyme F420 biosynthesis. In terms of biological role, guanylyltransferase that catalyzes the activation of phosphoenolpyruvate (PEP) as enolpyruvoyl-2-diphospho-5'-guanosine, via the condensation of PEP with GTP. It is involved in the biosynthesis of coenzyme F420, a hydride carrier cofactor. This Rhodococcus erythropolis (strain PR4 / NBRC 100887) protein is Phosphoenolpyruvate guanylyltransferase.